The chain runs to 427 residues: Enolase (427 aa).

Gln162 contributes to the (2R)-2-phosphoglycerate binding site. Glu204 serves as the catalytic Proton donor. Mg(2+) contacts are provided by Asp241, Glu282, and Asp309. 4 residues coordinate (2R)-2-phosphoglycerate: Lys334, Arg363, Ser364, and Lys385. Lys334 acts as the Proton acceptor in catalysis.

This sequence belongs to the enolase family. Mg(2+) serves as cofactor.

The protein localises to the cytoplasm. It localises to the secreted. It is found in the cell surface. It catalyses the reaction (2R)-2-phosphoglycerate = phosphoenolpyruvate + H2O. The protein operates within carbohydrate degradation; glycolysis; pyruvate from D-glyceraldehyde 3-phosphate: step 4/5. Catalyzes the reversible conversion of 2-phosphoglycerate (2-PG) into phosphoenolpyruvate (PEP). It is essential for the degradation of carbohydrates via glycolysis. This is Enolase from Frankia alni (strain DSM 45986 / CECT 9034 / ACN14a).